Consider the following 472-residue polypeptide: Glutamate--tRNA ligase (472 aa).

Residues 8–18 carry the 'HIGH' region motif; the sequence is PSPTGFLHIGS. A 'KMSKS' region motif is present at residues 239-243; it reads KLSKR. Position 242 (Lys-242) interacts with ATP.

This sequence belongs to the class-I aminoacyl-tRNA synthetase family. Glutamate--tRNA ligase type 1 subfamily. As to quaternary structure, monomer.

It localises to the cytoplasm. It carries out the reaction tRNA(Glu) + L-glutamate + ATP = L-glutamyl-tRNA(Glu) + AMP + diphosphate. Catalyzes the attachment of glutamate to tRNA(Glu) in a two-step reaction: glutamate is first activated by ATP to form Glu-AMP and then transferred to the acceptor end of tRNA(Glu). The chain is Glutamate--tRNA ligase from Solibacter usitatus (strain Ellin6076).